The primary structure comprises 433 residues: 3-phosphoshikimate 1-carboxyvinyltransferase (433 aa).

3 residues coordinate 3-phosphoshikimate: Lys-22, Ser-23, and Arg-27. Residue Lys-22 coordinates phosphoenolpyruvate. Residues Gly-95 and Arg-123 each coordinate phosphoenolpyruvate. 3-phosphoshikimate is bound by residues Ser-166, Gln-168, Asp-314, and Lys-341. Gln-168 contacts phosphoenolpyruvate. Residue Asp-314 is the Proton acceptor of the active site. Phosphoenolpyruvate contacts are provided by Arg-345 and Arg-386.

It belongs to the EPSP synthase family. In terms of assembly, monomer.

It localises to the cytoplasm. It catalyses the reaction 3-phosphoshikimate + phosphoenolpyruvate = 5-O-(1-carboxyvinyl)-3-phosphoshikimate + phosphate. It participates in metabolic intermediate biosynthesis; chorismate biosynthesis; chorismate from D-erythrose 4-phosphate and phosphoenolpyruvate: step 6/7. Functionally, catalyzes the transfer of the enolpyruvyl moiety of phosphoenolpyruvate (PEP) to the 5-hydroxyl of shikimate-3-phosphate (S3P) to produce enolpyruvyl shikimate-3-phosphate and inorganic phosphate. The polypeptide is 3-phosphoshikimate 1-carboxyvinyltransferase (Acidithiobacillus ferrooxidans (strain ATCC 23270 / DSM 14882 / CIP 104768 / NCIMB 8455) (Ferrobacillus ferrooxidans (strain ATCC 23270))).